The chain runs to 474 residues: Methylenetetrahydrofolate--tRNA-(uracil-5-)-methyltransferase TrmFO (474 aa).

FAD is bound at residue 9–14 (GGGLAG). Residues 425-451 (PPLERMPRNETGKRLRGPEKAALKKRA) form a disordered region. Over residues 429-451 (RMPRNETGKRLRGPEKAALKKRA) the composition is skewed to basic and acidic residues.

This sequence belongs to the MnmG family. TrmFO subfamily. Requires FAD as cofactor.

It localises to the cytoplasm. It catalyses the reaction uridine(54) in tRNA + (6R)-5,10-methylene-5,6,7,8-tetrahydrofolate + NADH + H(+) = 5-methyluridine(54) in tRNA + (6S)-5,6,7,8-tetrahydrofolate + NAD(+). The catalysed reaction is uridine(54) in tRNA + (6R)-5,10-methylene-5,6,7,8-tetrahydrofolate + NADPH + H(+) = 5-methyluridine(54) in tRNA + (6S)-5,6,7,8-tetrahydrofolate + NADP(+). In terms of biological role, catalyzes the folate-dependent formation of 5-methyl-uridine at position 54 (M-5-U54) in all tRNAs. In Methylorubrum populi (strain ATCC BAA-705 / NCIMB 13946 / BJ001) (Methylobacterium populi), this protein is Methylenetetrahydrofolate--tRNA-(uracil-5-)-methyltransferase TrmFO.